The sequence spans 299 residues: Glycine--tRNA ligase alpha subunit (299 aa).

This sequence belongs to the class-II aminoacyl-tRNA synthetase family. Tetramer of two alpha and two beta subunits.

It localises to the cytoplasm. It catalyses the reaction tRNA(Gly) + glycine + ATP = glycyl-tRNA(Gly) + AMP + diphosphate. This Dichelobacter nodosus (strain VCS1703A) protein is Glycine--tRNA ligase alpha subunit.